Consider the following 232-residue polypeptide: Enolase-phosphatase E1 (232 aa).

It belongs to the HAD-like hydrolase superfamily. MasA/MtnC family. As to quaternary structure, monomer. Requires Mg(2+) as cofactor.

The catalysed reaction is 5-methylsulfanyl-2,3-dioxopentyl phosphate + H2O = 1,2-dihydroxy-5-(methylsulfanyl)pent-1-en-3-one + phosphate. The protein operates within amino-acid biosynthesis; L-methionine biosynthesis via salvage pathway; L-methionine from S-methyl-5-thio-alpha-D-ribose 1-phosphate: step 3/6. It participates in amino-acid biosynthesis; L-methionine biosynthesis via salvage pathway; L-methionine from S-methyl-5-thio-alpha-D-ribose 1-phosphate: step 4/6. In terms of biological role, bifunctional enzyme that catalyzes the enolization of 2,3-diketo-5-methylthiopentyl-1-phosphate (DK-MTP-1-P) into the intermediate 2-hydroxy-3-keto-5-methylthiopentenyl-1-phosphate (HK-MTPenyl-1-P), which is then dephosphorylated to form the acireductone 1,2-dihydroxy-3-keto-5-methylthiopentene (DHK-MTPene). In Xylella fastidiosa (strain M12), this protein is Enolase-phosphatase E1.